The sequence spans 253 residues: Chitooligosaccharide deacetylase (253 aa).

H61 and H126 together coordinate Mg(2+).

Belongs to the YdjC deacetylase family. ChbG subfamily. In terms of assembly, homodimer. Mg(2+) is required as a cofactor.

It is found in the cytoplasm. The enzyme catalyses N,N'-diacetylchitobiose + H2O = N-acetyl-beta-D-glucosaminyl-(1-&gt;4)-D-glucosamine + acetate. It catalyses the reaction diacetylchitobiose-6'-phosphate + H2O = N'-monoacetylchitobiose-6'-phosphate + acetate. The protein operates within glycan degradation; chitin degradation. Functionally, involved in the degradation of chitin. ChbG is essential for growth on the acetylated chitooligosaccharides chitobiose and chitotriose but is dispensable for growth on cellobiose and chitosan dimer, the deacetylated form of chitobiose. Deacetylation of chitobiose-6-P and chitotriose-6-P is necessary for both the activation of the chb promoter by the regulatory protein ChbR and the hydrolysis of phosphorylated beta-glucosides by the phospho-beta-glucosidase ChbF. Catalyzes the removal of only one acetyl group from chitobiose-6-P to yield monoacetylchitobiose-6-P, the inducer of ChbR and the substrate of ChbF. The protein is Chitooligosaccharide deacetylase of Yersinia pestis bv. Antiqua (strain Angola).